Here is a 234-residue protein sequence, read N- to C-terminus: Purine nucleoside phosphorylase DeoD-type (234 aa).

His5 is a binding site for a purine D-ribonucleoside. Phosphate contacts are provided by residues Gly21, Arg25, Arg44, and 88–91 (RIGT). Residues 180–182 (DME) and 204–205 (SD) each bind a purine D-ribonucleoside. The active-site Proton donor is the Asp205.

It belongs to the PNP/UDP phosphorylase family. In terms of assembly, homohexamer; trimer of homodimers.

It catalyses the reaction a purine D-ribonucleoside + phosphate = a purine nucleobase + alpha-D-ribose 1-phosphate. The catalysed reaction is a purine 2'-deoxy-D-ribonucleoside + phosphate = a purine nucleobase + 2-deoxy-alpha-D-ribose 1-phosphate. Its function is as follows. Catalyzes the reversible phosphorolytic breakdown of the N-glycosidic bond in the beta-(deoxy)ribonucleoside molecules, with the formation of the corresponding free purine bases and pentose-1-phosphate. The protein is Purine nucleoside phosphorylase DeoD-type of Buchnera aphidicola subsp. Acyrthosiphon pisum (strain APS) (Acyrthosiphon pisum symbiotic bacterium).